The chain runs to 187 residues: Rusticyanin (187 aa).

A signal peptide spans 1–32; the sequence is MYTQNTMKKNWYVTVGAAAALAATVGMGTAMA. Residues 85–187 form the Plastocyanin-like domain; the sequence is SFEVHDKKNP…TGMFGKIIVK (103 aa). Cu cation is bound by residues His117, Cys170, His175, and Met180.

Monomer. The cofactor is Cu cation.

The protein localises to the periplasm. In terms of biological role, electron carrier from cytochrome c552 to the A-type oxidase. This Acidithiobacillus ferridurans protein is Rusticyanin (rus).